The following is a 252-amino-acid chain: Small ribosomal subunit protein uS3 (252 aa).

Residues 39 to 109 (IRNYVQTRLK…EVKIDVVEVV (71 aa)) form the KH type-2 domain. Residues 221-241 (EMKRIKERRSDSGPRSRNDRS) are compositionally biased toward basic and acidic residues. The tract at residues 221-252 (EMKRIKERRSDSGPRSRNDRSQKRRRRPNDRG) is disordered. A compositionally biased stretch (basic residues) spans 242–252 (QKRRRRPNDRG).

The protein belongs to the universal ribosomal protein uS3 family. In terms of assembly, part of the 30S ribosomal subunit. Forms a tight complex with proteins S10 and S14.

Its function is as follows. Binds the lower part of the 30S subunit head. Binds mRNA in the 70S ribosome, positioning it for translation. The polypeptide is Small ribosomal subunit protein uS3 (Chlorobium luteolum (strain DSM 273 / BCRC 81028 / 2530) (Pelodictyon luteolum)).